The primary structure comprises 303 residues: N-acetyl-D-glucosamine kinase (303 aa).

Residues Gly4–Lys11 and Gly133–Val140 contribute to the ATP site. 4 residues coordinate Zn(2+): His157, Cys177, Cys179, and Cys184.

The protein belongs to the ROK (NagC/XylR) family. NagK subfamily.

The enzyme catalyses N-acetyl-D-glucosamine + ATP = N-acetyl-D-glucosamine 6-phosphate + ADP + H(+). It participates in cell wall biogenesis; peptidoglycan recycling. Functionally, catalyzes the phosphorylation of N-acetyl-D-glucosamine (GlcNAc) derived from cell-wall degradation, yielding GlcNAc-6-P. The polypeptide is N-acetyl-D-glucosamine kinase (Yersinia enterocolitica serotype O:8 / biotype 1B (strain NCTC 13174 / 8081)).